The following is a 2164-amino-acid chain: Hemagglutinin A (2164 aa).

The first 25 residues, 1-25 (MRKLNSLFSLAVLLSLLCWGQTAAA), serve as a signal peptide directing secretion. 3 peptidase C25-like regions span residues 26 to 539 (QGGP…TPPP), 540 to 991 (GGSS…TPPP), and 992 to 1443 (GGTS…TPPP). 2 disordered regions span residues 493-512 (WDAP…LSES) and 520-541 (SWKT…PPGG). The segment covering 496 to 508 (PNGTPNPNPGTTT) has biased composition (low complexity).

Belongs to the peptidase C25 family.

In terms of biological role, agglutinates erythrocytes. This is Hemagglutinin A (hagA) from Porphyromonas gingivalis (strain ATCC BAA-308 / W83).